Consider the following 472-residue polypeptide: Arabinose-proton symporter (472 aa).

Over 1–29 (MVTINTESALTPRSLRDTRRMNMFVSVAA) the chain is Cytoplasmic. The chain crosses the membrane as a helical span at residues 30–50 (AVAGLLFGLDIGVIAGALPFI). The Periplasmic segment spans residues 51 to 63 (TDHFVLTSRLQEW). A helical membrane pass occupies residues 64–84 (VVSSMMLGAAIGALFNGWLSF). The Cytoplasmic portion of the chain corresponds to 85 to 91 (RLGRKYS). A helical membrane pass occupies residues 92-112 (LMAGAILFVLGSIGSAFATSV). The Periplasmic portion of the chain corresponds to 113-114 (EM). A helical membrane pass occupies residues 115 to 135 (LIAARVVLGIAVGIASYTAPL). The Cytoplasmic portion of the chain corresponds to 136 to 154 (YLSEMASENVRGKMISMYQ). The chain crosses the membrane as a helical span at residues 155 to 175 (LMVTLGIVLAFLSDTAFSYSG). Residues 176–178 (NWR) are Periplasmic-facing. The chain crosses the membrane as a helical span at residues 179-199 (AMLGVLALPAVLLIILVVFLP). Topologically, residues 200–257 (NSPRWLAEKGRHIEAEEVLRMLRDTSEKAREELNEIRESLKLKQGGWALFKINRNVRR) are cytoplasmic. The chain crosses the membrane as a helical span at residues 258 to 278 (AVFLGMLLQAMQQFTGMNIIM). At 279–297 (YYAPRIFKMAGFTTTEQQM) the chain is on the periplasmic side. The helical transmembrane segment at 298–318 (IATLVVGLTFMFATFIAVFTV) threads the bilayer. Residues 319 to 325 (DKAGRKP) are Cytoplasmic-facing. A helical membrane pass occupies residues 326–346 (ALKIGFSVMALGTLVLGYCLM). Over 347-361 (QFDNGTASSGLSWLS) the chain is Periplasmic. A helical transmembrane segment spans residues 362–382 (VGMTMMCIAGYAMSAAPVVWI). The Cytoplasmic segment spans residues 383 to 404 (LCSEIQPLKCRDFGITCSTTTN). The next 2 membrane-spanning stretches (helical) occupy residues 405-425 (WVSN…IGAA) and 426-446 (GTFW…FWLI). At 447 to 472 (PETKNVTLEHIERKLMAGEKLRNIGV) the chain is on the cytoplasmic side.

Belongs to the major facilitator superfamily. Sugar transporter (TC 2.A.1.1) family.

The protein resides in the cell inner membrane. It carries out the reaction L-arabinose(in) + H(+)(in) = L-arabinose(out) + H(+)(out). In terms of biological role, uptake of L-arabinose across the cytoplasmic membrane with the concomitant transport of protons into the cell (symport system). In Escherichia coli O157:H7, this protein is Arabinose-proton symporter (araE).